Reading from the N-terminus, the 273-residue chain is Flagellin FljM (273 aa).

This sequence belongs to the bacterial flagellin family. As to quaternary structure, in C.crescentus, the flagellar filament is composed of multiple flagellins of 29 kDa; 27 kDa and 25 kDa.

It is found in the secreted. The protein localises to the bacterial flagellum. In terms of biological role, flagellin is the subunit protein which polymerizes to form the filaments of bacterial flagella. This Caulobacter vibrioides (strain ATCC 19089 / CIP 103742 / CB 15) (Caulobacter crescentus) protein is Flagellin FljM (fljM).